A 160-amino-acid chain; its full sequence is CXXC motif containing zinc binding protein (160 aa).

Residues Cys33, Cys36, Cys67, and Cys70 each contribute to the Zn(2+) site.

It belongs to the UPF0587 family.

This chain is CXXC motif containing zinc binding protein (czib), found in Xenopus laevis (African clawed frog).